A 375-amino-acid chain; its full sequence is Phosphoribulokinase, chloroplastic (375 aa).

The N-terminal 31 residues, 1 to 31 (MAFTMRAPAPRATAQSRVTANRARRSLVVRA), are a transit peptide targeting the chloroplast. C47 and C86 are joined by a disulfide.

The protein belongs to the phosphoribulokinase family. In terms of assembly, component of a complex that contains two dimers of PRK, two tetramers of GAPDH and CP12.

Its subcellular location is the plastid. It is found in the chloroplast. It carries out the reaction D-ribulose 5-phosphate + ATP = D-ribulose 1,5-bisphosphate + ADP + H(+). The protein operates within carbohydrate biosynthesis; Calvin cycle. With respect to regulation, light regulated via thioredoxin by reversible oxidation/reduction of sulfhydryl/disulfide groups. The sequence is that of Phosphoribulokinase, chloroplastic (PRKA) from Chlamydomonas reinhardtii (Chlamydomonas smithii).